We begin with the raw amino-acid sequence, 260 residues long: Malonyl-[acyl-carrier protein] O-methyltransferase (260 aa).

The protein belongs to the methyltransferase superfamily.

It carries out the reaction malonyl-[ACP] + S-adenosyl-L-methionine = malonyl-[ACP] methyl ester + S-adenosyl-L-homocysteine. The protein operates within cofactor biosynthesis; biotin biosynthesis. In terms of biological role, converts the free carboxyl group of a malonyl-thioester to its methyl ester by transfer of a methyl group from S-adenosyl-L-methionine (SAM). It allows to synthesize pimeloyl-ACP via the fatty acid synthetic pathway. The protein is Malonyl-[acyl-carrier protein] O-methyltransferase of Haemophilus influenzae (strain ATCC 51907 / DSM 11121 / KW20 / Rd).